Here is a 396-residue protein sequence, read N- to C-terminus: Deoxyuridine 5'-triphosphate nucleotidohydrolase (396 aa).

Substrate-binding positions include 280–282 (RSS) and 380–381 (FG).

The protein belongs to the dUTPase family. Mg(2+) serves as cofactor.

It catalyses the reaction dUTP + H2O = dUMP + diphosphate + H(+). Functionally, involved in nucleotide metabolism: produces dUMP, the immediate precursor of thymidine nucleotides and decreases the intracellular concentration of dUTP to avoid uracil incorporation into viral DNA. The polypeptide is Deoxyuridine 5'-triphosphate nucleotidohydrolase (Varicella-zoster virus (strain Dumas) (HHV-3)).